We begin with the raw amino-acid sequence, 529 residues long: MQQRRPVRRALLSVSDKAGIVEFAQALTARGVELLSTGGTARLLADKGLPVTEVSDYTGFPEMMDGRVKTLHPKVHGGILGRRGQDDGIMQQHGIAPIDMVVVNLYPFAQTVAREGCSLEDAVENIDIGGPTMVRSAAKNHKDVAIVVKSSDYDAIINEMDANEGSLTLNTRFDLAIKAFEHTAAYDSMIANYFGSMVPAYHGESQEAAGRFPRTLNLNFIKKQDMRYGENSHQQAAFYIEENVKEASVATATQLQGKALSYNNIADTDAALECVKEFNEPACVIVKHANPCGVAVSNSILDAYDRAYKTDPTSAFGGIIAFNRELDAETAQAIISRQFVEVIIAPSASEEALKITAAKQNVRVLTCGQWDARVAGLDFKRVNGGLLVQDRDLGMVTAGELRVVSKRQPSEQELRDALFCWKVAKFVKSNAIVYAKDNMTIGIGAGQMSRVYSAKIAGIKAGDEGLEVKGSAMASDAFFPFRDGIDAAAAVGITCVIQPGGSIRDDEVIAAADEHGIAMIFTDMRHFRH.

Positions Met-1–Val-148 constitute an MGS-like domain.

It belongs to the PurH family.

It carries out the reaction (6R)-10-formyltetrahydrofolate + 5-amino-1-(5-phospho-beta-D-ribosyl)imidazole-4-carboxamide = 5-formamido-1-(5-phospho-D-ribosyl)imidazole-4-carboxamide + (6S)-5,6,7,8-tetrahydrofolate. The enzyme catalyses IMP + H2O = 5-formamido-1-(5-phospho-D-ribosyl)imidazole-4-carboxamide. It participates in purine metabolism; IMP biosynthesis via de novo pathway; 5-formamido-1-(5-phospho-D-ribosyl)imidazole-4-carboxamide from 5-amino-1-(5-phospho-D-ribosyl)imidazole-4-carboxamide (10-formyl THF route): step 1/1. Its pathway is purine metabolism; IMP biosynthesis via de novo pathway; IMP from 5-formamido-1-(5-phospho-D-ribosyl)imidazole-4-carboxamide: step 1/1. This Klebsiella pneumoniae (strain 342) protein is Bifunctional purine biosynthesis protein PurH.